The primary structure comprises 303 residues: Ribosomal protein L11 methyltransferase (303 aa).

S-adenosyl-L-methionine contacts are provided by threonine 146, glycine 167, aspartate 189, and asparagine 236.

The protein belongs to the methyltransferase superfamily. PrmA family.

It localises to the cytoplasm. It carries out the reaction L-lysyl-[protein] + 3 S-adenosyl-L-methionine = N(6),N(6),N(6)-trimethyl-L-lysyl-[protein] + 3 S-adenosyl-L-homocysteine + 3 H(+). In terms of biological role, methylates ribosomal protein L11. The polypeptide is Ribosomal protein L11 methyltransferase (Acinetobacter baylyi (strain ATCC 33305 / BD413 / ADP1)).